We begin with the raw amino-acid sequence, 117 residues long: Immunoglobulin kappa variable 1D-12 (117 aa).

The N-terminal stretch at 1–22 (MDMMVPAQLLGLLLLWFPGSRC) is a signal peptide. The interval 23–45 (DIQMTQSPSSVSASVGDRVTITC) is framework-1. The Ig-like domain occupies 24–117 (IQMTQSPSSV…YYCQQANSFP (94 aa)). A disulfide bridge links Cys45 with Cys110. Residues 46 to 56 (RASQGISSWLA) form a complementarity-determining-1 region. The tract at residues 57 to 71 (WYQQKPGKAPKLLIY) is framework-2. Positions 72–78 (AASSLQS) are complementarity-determining-2. The framework-3 stretch occupies residues 79–110 (GVPSRFSGSGSGTDFTLTISSLQPEDFATYYC). The interval 111–117 (QQANSFP) is complementarity-determining-3.

In terms of assembly, immunoglobulins are composed of two identical heavy chains and two identical light chains; disulfide-linked.

It localises to the secreted. It is found in the cell membrane. Functionally, v region of the variable domain of immunoglobulin light chains that participates in the antigen recognition. Immunoglobulins, also known as antibodies, are membrane-bound or secreted glycoproteins produced by B lymphocytes. In the recognition phase of humoral immunity, the membrane-bound immunoglobulins serve as receptors which, upon binding of a specific antigen, trigger the clonal expansion and differentiation of B lymphocytes into immunoglobulins-secreting plasma cells. Secreted immunoglobulins mediate the effector phase of humoral immunity, which results in the elimination of bound antigens. The antigen binding site is formed by the variable domain of one heavy chain, together with that of its associated light chain. Thus, each immunoglobulin has two antigen binding sites with remarkable affinity for a particular antigen. The variable domains are assembled by a process called V-(D)-J rearrangement and can then be subjected to somatic hypermutations which, after exposure to antigen and selection, allow affinity maturation for a particular antigen. The chain is Immunoglobulin kappa variable 1D-12 from Homo sapiens (Human).